A 49-amino-acid chain; its full sequence is Large ribosomal subunit protein eL40 (49 aa).

Belongs to the eukaryotic ribosomal protein eL40 family.

In Methanosarcina barkeri (strain Fusaro / DSM 804), this protein is Large ribosomal subunit protein eL40.